The following is a 31-amino-acid chain: Cycloviolacin-O14 (31 aa).

Residues 1-31 (GSIPACGESCFKGKCYTPGCSCSKYPLCAKN) constitute a cross-link (cyclopeptide (Gly-Asn)). 3 cysteine pairs are disulfide-bonded: cysteine 6–cysteine 20, cysteine 10–cysteine 22, and cysteine 15–cysteine 28.

This is a cyclic peptide. Expressed in leaves and petioles but not in petals, roots and runners (at protein level).

Functionally, probably participates in a plant defense mechanism. Has hemolytic activity. This is Cycloviolacin-O14 from Viola odorata (Sweet violet).